Consider the following 487-residue polypeptide: MLTLQIFEAFAIILCVYFLWSRRRFYIMMLKLPGPMGFPFIGLAFEYIRLKRKIRLRTILFKIYGKTVLTWIGLTPVLVTCEPKILEDIFTSPNCSNRSSVVDKAISSCLGLGLLTLKNNHWNERRKLLLPSFKNNAVLSFVPVLNNEANFLVTLLAEFVDGGDINLLPELNKWSFKIAAQITMGDEVRNQANYQNGNLLESYKALNNLIPIGVVMPWLRNKYLGKLFSYEKRRLEAATQSNAFIKDIIDKKLSSTDNSSEPALIDRILNLVRIGELSYDDVMGEFSNIIFAASDTLSITVNNVLILMAMFPKYQDNVFEELAEVFPSGGEFEASHADLEKLVKLDRVLHETMRLIPAVPLLIRQTSHSIQLSNGFYIPEGVTLMIDIFHTHRNKDIWGPQANAFNPDNFLPENKRARPPYSYLPFSKGKKTCLGWKLSLISAKLALAKILRNYMLSTTFLYKDLRFIDNTTMKLAEQPLLAVKRRI.

Tyrosine 223 bears the Phosphotyrosine mark. Cysteine 433 serves as a coordination point for heme.

The protein belongs to the cytochrome P450 family. It depends on heme as a cofactor.

Its subcellular location is the endoplasmic reticulum membrane. The protein resides in the microsome membrane. Functionally, may be involved in the metabolism of insect hormones and in the breakdown of synthetic insecticides. In Drosophila melanogaster (Fruit fly), this protein is Probable cytochrome P450 313a5 (Cyp313a5).